A 383-amino-acid polypeptide reads, in one-letter code: N-acetyldiaminopimelate deacetylase (383 aa).

D72 is a catalytic residue. E131 (proton acceptor) is an active-site residue.

The protein belongs to the peptidase M20A family. N-acetyldiaminopimelate deacetylase subfamily.

It catalyses the reaction N-acetyl-(2S,6S)-2,6-diaminopimelate + H2O = (2S,6S)-2,6-diaminopimelate + acetate. Its pathway is amino-acid biosynthesis; L-lysine biosynthesis via DAP pathway; LL-2,6-diaminopimelate from (S)-tetrahydrodipicolinate (acetylase route): step 3/3. Catalyzes the conversion of N-acetyl-diaminopimelate to diaminopimelate and acetate. The sequence is that of N-acetyldiaminopimelate deacetylase from Lacticaseibacillus paracasei (strain ATCC 334 / BCRC 17002 / CCUG 31169 / CIP 107868 / KCTC 3260 / NRRL B-441) (Lactobacillus paracasei).